The sequence spans 661 residues: Acetyl-coenzyme A synthetase (661 aa).

CoA is bound by residues 197–200 (RGGK) and T320. ATP is bound by residues 396–398 (GEP), 420–425 (DTWWQT), D511, and R526. S534 lines the CoA pocket. Position 537 (R537) interacts with ATP. Positions 548 and 553 each coordinate Mg(2+). N6-acetyllysine is present on K620.

This sequence belongs to the ATP-dependent AMP-binding enzyme family. It depends on Mg(2+) as a cofactor. Post-translationally, acetylated. Deacetylation by the SIR2-homolog deacetylase activates the enzyme.

The catalysed reaction is acetate + ATP + CoA = acetyl-CoA + AMP + diphosphate. Its function is as follows. Catalyzes the conversion of acetate into acetyl-CoA (AcCoA), an essential intermediate at the junction of anabolic and catabolic pathways. AcsA undergoes a two-step reaction. In the first half reaction, AcsA combines acetate with ATP to form acetyl-adenylate (AcAMP) intermediate. In the second half reaction, it can then transfer the acetyl group from AcAMP to the sulfhydryl group of CoA, forming the product AcCoA. The polypeptide is Acetyl-coenzyme A synthetase (Leptospira interrogans serogroup Icterohaemorrhagiae serovar Lai (strain 56601)).